A 173-amino-acid polypeptide reads, in one-letter code: Peptidyl-prolyl cis-trans isomerase 3 (173 aa).

Residues 7–170 (FFDITIGGKA…KDCMIADCGQ (164 aa)) enclose the PPIase cyclophilin-type domain.

It belongs to the cyclophilin-type PPIase family. Exclusively expressed in the single anterior excretory cell.

The catalysed reaction is [protein]-peptidylproline (omega=180) = [protein]-peptidylproline (omega=0). In terms of biological role, catalyzes the cis-trans isomerization of proline imidic peptide bonds in oligopeptides. Plays a role in protein folding, transport and assembly. The chain is Peptidyl-prolyl cis-trans isomerase 3 (cyn-3) from Caenorhabditis elegans.